The primary structure comprises 855 residues: tRNA(Met) cytidine acetyltransferase TmcA (855 aa).

ATP is bound by residues glutamine 260, 286 to 295 (GRGKSALLGI), and arginine 438. Positions 480-663 (PDLRYWFEDP…GEYSVAVIRP (184 aa)) constitute an N-acetyltransferase domain. Acetyl-CoA-binding positions include 590-592 (IAT), 597-603 (MRHGLGS), glutamate 630, and arginine 637.

The protein belongs to the RNA cytidine acetyltransferase family. TmcA subfamily.

It is found in the cytoplasm. It carries out the reaction cytidine(34) in elongator tRNA(Met) + acetyl-CoA + ATP + H2O = N(4)-acetylcytidine(34) in elongator tRNA(Met) + ADP + phosphate + CoA + H(+). Functionally, catalyzes the formation of N(4)-acetylcytidine (ac(4)C) at the wobble position of tRNA(Met), by using acetyl-CoA as an acetyl donor and ATP (or GTP). This is tRNA(Met) cytidine acetyltransferase TmcA from Methanopyrus kandleri (strain AV19 / DSM 6324 / JCM 9639 / NBRC 100938).